The following is a 761-amino-acid chain: Membrane protein of ER body-like protein (761 aa).

Disordered regions lie at residues 1–85 (MGSA…GEHT) and 120–162 (GSES…RSRE). Positions 22-31 (EVEEDDEQIV) are enriched in acidic residues. The segment covering 48 to 65 (VDSSTITNTSSSSSSSFS) has biased composition (low complexity). Residues 74-85 (PDFHSNGDGEHT) are compositionally biased toward basic and acidic residues. The segment covering 136–154 (TADLNGEQTQLEPENGSTS) has biased composition (polar residues). Residues 186–206 (IEEEVDFEDVEYHDVENMMDK) are a coiled coil. Disordered stretches follow at residues 338–374 (SSSVLEANPPPRESIVPVVNPSRGNLSPMRKDTTGSA) and 416–448 (QTQQKIDNDDSSTADGNHTSDKGRLSPIQPSHG). Residues 416–432 (QTQQKIDNDDSSTADGN) are compositionally biased toward polar residues. A run of 5 helical transmembrane segments spans residues 549-569 (IVYGGLLEAITSLGVISSAAG), 573-593 (SMLNILVLGLANLLGGLILII), 640-660 (VAILSFIITGILPPVVYYFSF), 670-690 (VASVFGASLFCIVLLAIAKAH), and 702-722 (ILYYGSIAVSVSGISYVVGNF).

Belongs to the CCC1 family.

Its subcellular location is the endoplasmic reticulum membrane. Functionally, not essential for the accumulation of ER body components, including PYK10. The polypeptide is Membrane protein of ER body-like protein (MEBL) (Arabidopsis thaliana (Mouse-ear cress)).